Reading from the N-terminus, the 443-residue chain is GTPase Der (443 aa).

EngA-type G domains follow at residues 3 to 167 (PVIA…PEEK) and 176 to 349 (IKIA…QSIQ). Residues 9–16 (GRPNVGKS), 56–60 (DTGGL), 119–122 (NKAD), 182–189 (GRPNVGKS), 229–233 (DTAGI), and 294–297 (NKWD) each bind GTP. The KH-like domain occupies 350-434 (QELTTGQLTR…PVHIKLKTDP (85 aa)).

This sequence belongs to the TRAFAC class TrmE-Era-EngA-EngB-Septin-like GTPase superfamily. EngA (Der) GTPase family. Associates with the 50S ribosomal subunit.

Functionally, GTPase that plays an essential role in the late steps of ribosome biogenesis. The sequence is that of GTPase Der from Coxiella burnetii (strain CbuG_Q212) (Coxiella burnetii (strain Q212)).